The primary structure comprises 417 residues: Riboflavin biosynthesis protein RibBA (417 aa).

Residues 1-204 (MTRLDSIERA…IADLIEWRRK (204 aa)) are DHBP synthase. D-ribulose 5-phosphate contacts are provided by residues 28–29 (RE), Asp33, 141–145 (RPGHT), and Glu165. Glu29 contacts Mg(2+). Residue His144 coordinates Mg(2+). A GTP cyclohydrolase II region spans residues 205–417 (HEKHVQRIAE…LDDHPEADGA (213 aa)). Residue 259–263 (RVHSE) participates in GTP binding. Cys264, Cys275, and Cys277 together coordinate Zn(2+). GTP-binding positions include Gln280, 303–305 (EGR), and Thr325. Catalysis depends on Asp337, which acts as the Proton acceptor; for GTP cyclohydrolase activity. Arg339 functions as the Nucleophile; for GTP cyclohydrolase activity in the catalytic mechanism. 2 residues coordinate GTP: Thr360 and Lys365.

This sequence in the N-terminal section; belongs to the DHBP synthase family. It in the C-terminal section; belongs to the GTP cyclohydrolase II family. Requires Mg(2+) as cofactor. It depends on Mn(2+) as a cofactor. Zn(2+) is required as a cofactor.

It catalyses the reaction D-ribulose 5-phosphate = (2S)-2-hydroxy-3-oxobutyl phosphate + formate + H(+). The catalysed reaction is GTP + 4 H2O = 2,5-diamino-6-hydroxy-4-(5-phosphoribosylamino)-pyrimidine + formate + 2 phosphate + 3 H(+). Its pathway is cofactor biosynthesis; riboflavin biosynthesis; 2-hydroxy-3-oxobutyl phosphate from D-ribulose 5-phosphate: step 1/1. It functions in the pathway cofactor biosynthesis; riboflavin biosynthesis; 5-amino-6-(D-ribitylamino)uracil from GTP: step 1/4. In terms of biological role, catalyzes the conversion of D-ribulose 5-phosphate to formate and 3,4-dihydroxy-2-butanone 4-phosphate. Its function is as follows. Catalyzes the conversion of GTP to 2,5-diamino-6-ribosylamino-4(3H)-pyrimidinone 5'-phosphate (DARP), formate and pyrophosphate. The sequence is that of Riboflavin biosynthesis protein RibBA from Mycobacteroides abscessus (strain ATCC 19977 / DSM 44196 / CCUG 20993 / CIP 104536 / JCM 13569 / NCTC 13031 / TMC 1543 / L948) (Mycobacterium abscessus).